The primary structure comprises 860 residues: DNA mismatch repair protein MutS (860 aa).

608-615 is an ATP binding site; the sequence is GPNMAGKS.

This sequence belongs to the DNA mismatch repair MutS family.

Its function is as follows. This protein is involved in the repair of mismatches in DNA. It is possible that it carries out the mismatch recognition step. This protein has a weak ATPase activity. This is DNA mismatch repair protein MutS from Borrelia turicatae (strain 91E135).